Here is a 56-residue protein sequence, read N- to C-terminus: LAAVSVDCSEYPKPACTLEHRPLCGSDNKTYGNKCNFCNAVVESNGTLTLSHFGKC.

Residues 6-56 (VDCSEYPKPACTLEHRPLCGSDNKTYGNKCNFCNAVVESNGTLTLSHFGKC) enclose the Kazal-like domain. Cystine bridges form between Cys-8–Cys-38, Cys-16–Cys-35, and Cys-24–Cys-56. N-linked (GlcNAc...) asparagine glycosylation is present at Asn-45.

The protein resides in the secreted. The chain is Ovomucoid from Pavo cristatus (Indian peafowl).